Consider the following 116-residue polypeptide: Large ribosomal subunit protein bL20 (116 aa).

Belongs to the bacterial ribosomal protein bL20 family.

Functionally, binds directly to 23S ribosomal RNA and is necessary for the in vitro assembly process of the 50S ribosomal subunit. It is not involved in the protein synthesizing functions of that subunit. The chain is Large ribosomal subunit protein bL20 from Desulforapulum autotrophicum (strain ATCC 43914 / DSM 3382 / VKM B-1955 / HRM2) (Desulfobacterium autotrophicum).